The chain runs to 517 residues: Splicing factor U2AF 59 kDa subunit (517 aa).

The segment covering 1–13 (MDLSSRLSSGSSR) has biased composition (low complexity). The interval 1–112 (MDLSSRLSSG…PSRERSVRSI (112 aa)) is disordered. Basic and acidic residues predominate over residues 20–89 (DYRDEEPRRE…RRYDDYEPRS (70 aa)). RRM domains follow at residues 310–388 (DKIY…FACV) and 418–509 (RVLQ…FYGE).

The protein belongs to the splicing factor SR family. As to quaternary structure, forms a heterodimer with the U2AF small subunit. Can also form a homodimer. U2AF large subunit (U2AF59), U2AF small subunit (U2AF23) and SF1 (bpb1) interact to form a complex required for complex A formation. Interacts with wat1/pop3.

The protein localises to the nucleus. In terms of biological role, necessary for the splicing of pre-mRNA. The SF1-U2AF59-U2AF23 complex has a role in the recognition of the branch site (5'-UACUAAC-3'), the pyrimidine tract and the 3'-splice site at the 3'-end of introns. The sequence is that of Splicing factor U2AF 59 kDa subunit (prp2) from Schizosaccharomyces pombe (strain 972 / ATCC 24843) (Fission yeast).